We begin with the raw amino-acid sequence, 603 residues long: F-box only protein 46 (603 aa).

Residues 20-54 (YSQNQPRPPSATLKPPVCPDTSSGTEPDHRPAHLE) form a disordered region. Phosphoserine is present on residues serine 21 and serine 67. 4 disordered regions span residues 111-163 (GGSR…PTSS), 235-301 (EAQR…TRAK), 332-359 (EASEGETPAPARPEDTPPAPPPPPARDC), and 396-442 (TVSP…GTTD). Threonine 347 carries the phosphothreonine modification. Positions 347-356 (TPPAPPPPPA) are enriched in pro residues. The 53-residue stretch at 470–522 (RQYMLLLPEHVLVKIFSFLPTRALAALKCTCHHFKGIIEAFGVRATDSRWSRD) folds into the F-box domain.

In terms of assembly, part of a SCF (SKP1-cullin-F-box) protein ligase complex SCF(FBXO46) composed of CUL1, SKP1, RBX1 and FBXO46. Phosphorylated by ATM in response to DNA damage, promoting ubiquitination and degradation by the SCF(FBXO31) complex. Post-translationally, ATM-phosphorylated FBXO46 is ubiquitinated and degradaded by the SCF(FBXO31) complex in response to DNA damage.

It participates in protein modification; protein ubiquitination. In terms of biological role, substrate-recognition component of the SCF(FBXO46) protein ligase complex, which mediates the ubiquitination and degradation of target proteins. In absence of stress, the SCF(FBXO46) complex catalyzes ubiquitination and degradation of MTOR-phosphorylated FBXO31. This chain is F-box only protein 46 (Fbxo46), found in Rattus norvegicus (Rat).